A 74-amino-acid polypeptide reads, in one-letter code: Translation initiation factor IF-1 (74 aa).

Residues 1-72 enclose the S1-like domain; sequence MGKEDVIRME…TRGRIVYRKK (72 aa).

The protein belongs to the IF-1 family. Component of the 30S ribosomal translation pre-initiation complex which assembles on the 30S ribosome in the order IF-2 and IF-3, IF-1 and N-formylmethionyl-tRNA(fMet); mRNA recruitment can occur at any time during PIC assembly.

It localises to the cytoplasm. Functionally, one of the essential components for the initiation of protein synthesis. Stabilizes the binding of IF-2 and IF-3 on the 30S subunit to which N-formylmethionyl-tRNA(fMet) subsequently binds. Helps modulate mRNA selection, yielding the 30S pre-initiation complex (PIC). Upon addition of the 50S ribosomal subunit IF-1, IF-2 and IF-3 are released leaving the mature 70S translation initiation complex. This chain is Translation initiation factor IF-1, found in Thermotoga maritima (strain ATCC 43589 / DSM 3109 / JCM 10099 / NBRC 100826 / MSB8).